The sequence spans 306 residues: D-alanine--D-alanine ligase (306 aa).

In terms of domain architecture, ATP-grasp spans 107–300 (KEAYRAAGLP…FGQLCAWMVE (194 aa)). Residue 134–184 (MQPPYVVKPYNEGSSVGVYIVTEAANGPPVLAPDLPATLMVEEYVPGRELS) participates in ATP binding. Positions 251, 267, and 269 each coordinate Mg(2+).

This sequence belongs to the D-alanine--D-alanine ligase family. Mg(2+) serves as cofactor. Requires Mn(2+) as cofactor.

It is found in the cytoplasm. The enzyme catalyses 2 D-alanine + ATP = D-alanyl-D-alanine + ADP + phosphate + H(+). Its pathway is cell wall biogenesis; peptidoglycan biosynthesis. Cell wall formation. This Ruegeria pomeroyi (strain ATCC 700808 / DSM 15171 / DSS-3) (Silicibacter pomeroyi) protein is D-alanine--D-alanine ligase.